Consider the following 264-residue polypeptide: Undecaprenyl-diphosphatase 2 (264 aa).

The next 7 membrane-spanning stretches (helical) occupy residues 29–49, 77–97, 107–127, 137–157, 180–200, 212–232, and 243–263; these read GSAF…SYFW, SWIV…SGVL, LTVI…AEIF, ASLA…IPGV, FSFL…LWEL, VLAT…WGLM, and FVIY…MGWL.

It belongs to the UppP family.

The protein localises to the cell inner membrane. It catalyses the reaction di-trans,octa-cis-undecaprenyl diphosphate + H2O = di-trans,octa-cis-undecaprenyl phosphate + phosphate + H(+). In terms of biological role, catalyzes the dephosphorylation of undecaprenyl diphosphate (UPP). Confers resistance to bacitracin. The sequence is that of Undecaprenyl-diphosphatase 2 from Mesorhizobium japonicum (strain LMG 29417 / CECT 9101 / MAFF 303099) (Mesorhizobium loti (strain MAFF 303099)).